The chain runs to 914 residues: MSFVIAVPETIAAAATDLADLGSTIAGANAAAAANTTSLLAAGADEISAAIAALFGAHGRAYQAASAEAAAFHGRFVQALTTGGGAYAAAEAAAVTPLLNSINAPVLAATGRPLIGNGANGAPGTGANGGDAGWLIGNGGAGGSGAKGANGGAGGPGGAAGLFGNGGAGGAGGTATANNGIGGAGGAGGSAMLFGAGGAGGAGGAATSLVGGIGGTGGTGGNAGMLAGAAGAGGAGGFSFSTAGGAGGAGGAGGLFTTGGVGGAGGQGHTGGAGGAGGAGGLFGAGGMGGAGGFGDHGTLGTGGAGGDGGGGGLFGAGGDGGAGGSGLTTGGAAGNGGNAGTLSLGAAGGAGGTGGAGGTVFGGGKGGAGGAGGNAGMLFGSGGGGGTGGFGFAAGGQGGVGGSAGMLSGSGGSGGAGGSGGPAGTAAGGAGGAGGAPGLIGNGGNGGNGGESGGTGGVGGAGGNAVLIGNGGEGGIGALAGKSGFGGFGGLLLGADGYNAPESTSPWHNLQQDILSFINEPTEALTGRPLIGNGDSGTPGTGDDGGAGGWLFGNGGNGGAGAAGTNGSAGGAGGAGGILFGTGGAGGAGGVGTAGAGGAGGAGGSAFLIGSGGTGGVGGAATTTGGVGGAGGNAGLLIGAAGLGGCGGGAFTAGVTTGGAGGTGGAAGLFANGGAGGAGGTGSTAGGAGGAGGAGGLYAHGGTGGPGGNGGSTGAGGTGGAGGPGGLYGAGGSGGAGGHGGMAGGGGGVGGNAGSLTLNASGGAGGSGGSSLSGKAGAGGAGGSAGLFYGSGGAGGNGGYSLNGTGGDGGTGGAGQITGLRSGFGGAGGAGGASDTGAGGNGGAGGKAGLYGNGGDGGAGGDGATSGKGGAGGNAVVIGNGGNGGNAGKAGGTAGAGGAGGLVLGRDGQHGLT.

The PE domain maps to 1-93 (MSFVIAVPET…GGAYAAAEAA (93 aa)). Disordered regions lie at residues 412–431 (GGSGGAGGSGGPAGTAAGGA) and 895–914 (AGAGGAGGLVLGRDGQHGLT). The segment covering 895 to 904 (AGAGGAGGLV) has biased composition (gly residues).

It belongs to the mycobacterial PE family. PGRS subfamily.

This chain is WAG22 antigen (wag22), found in Mycobacterium bovis (strain ATCC BAA-935 / AF2122/97).